A 369-amino-acid polypeptide reads, in one-letter code: Tyrosinase-like protein orsC (369 aa).

The first 23 residues, 1-23 (MLAFNPLVTALAALIFLFCQANA), serve as a signal peptide directing secretion. Cu cation is bound by residues His-112 and His-121. N-linked (GlcNAc...) asparagine glycosylation is found at Asn-165, Asn-179, Asn-253, and Asn-272. His-315 lines the Cu cation pocket.

It participates in secondary metabolite biosynthesis. Functionally, tyrosinase-like protein; part of the gene cluster that mediates the biosynthesis of orsellinic acid, as well as of the cathepsin K inhibitors F9775 A and F9775 B. The non-reducing polyketide synthase orsA produces orsellinic acid by condensing acetyl-CoA with 3 malonyl-CoA units. Further modifications by the decarboxylase orsB and the tyrosinase-like protein orsC lead to the production of F9775 A and F9775 B. The functions of orsD and orsE remain unclear since only orsB and orsC are required to convert orsellinic acid into F9775 A and F9775 B. This Emericella nidulans (strain FGSC A4 / ATCC 38163 / CBS 112.46 / NRRL 194 / M139) (Aspergillus nidulans) protein is Tyrosinase-like protein orsC.